Consider the following 207-residue polypeptide: Cytidylyl-2-hydroxypropylphosphonate hydrolase (207 aa).

Tryptophan 68, arginine 74, glutamine 76, and serine 77 together coordinate CDP. A divalent metal cation contacts are provided by asparagine 109, aspartate 125, glutamate 127, and aspartate 129. CDP is bound at residue lysine 142. Lysine 142 serves as the catalytic Proton donor. A divalent metal cation is bound at residue aspartate 143.

This sequence belongs to the FomD family. Mn(2+) serves as cofactor. The cofactor is Co(2+).

The enzyme catalyses cytidine 5'-({hydroxy[(S)-2-hydroxypropyl]phosphonoyl}phosphate) + H2O = (S)-2-hydroxypropylphosphonate + CMP + H(+). It functions in the pathway antibiotic biosynthesis; fosfomycin biosynthesis. Its activity is regulated as follows. Hydrolysis of (S)-HPP-CMP is inhibited by CDP. Functionally, involved in fosfomycin biosynthesis. Catalyzes the hydrolysis of cytidylyl (S)-2-hydroxypropylphosphonate ((S)-HPP-CMP) to give (S)-2-hydroxypropylphosphonate ((S)-HPP) and CMP. Can also hydrolyze (R)-HPP-CMP and cytidylyl 2-hydroxyethylphosphonate (HEP-CMP), which is a biosynthetic intermediate before C-methylation, but the catalytic efficiency is much higher with (S)-HPP-CMP. This chain is Cytidylyl-2-hydroxypropylphosphonate hydrolase, found in Streptomyces fradiae (Streptomyces roseoflavus).